We begin with the raw amino-acid sequence, 373 residues long: Protein RETARDED ROOT GROWTH, mitochondrial (373 aa).

A mitochondrion-targeting transit peptide spans 1–49; the sequence is MGKWRAVAALLLRNQLLNSSKRLNLSSSPCVSKHPTIGLASRFLNFRHF. Residues 346-362 form a helical membrane-spanning segment; it reads EWCIIFLLAIENAIGIY.

Belongs to the RMD1/sif2 family. Predominantly expressed in the root meristem, in the primary and lateral root tips. Also present in leaves and pollen.

It is found in the mitochondrion membrane. Its subcellular location is the mitochondrion. In terms of biological role, required for the maintenance of mitochondrial structure. Positive regulator of cell division and endoreduplication but negative regulator of cell expansion in the postembryonic root meristem, thus leading to the promotion of root growth. The protein is Protein RETARDED ROOT GROWTH, mitochondrial of Arabidopsis thaliana (Mouse-ear cress).